The chain runs to 493 residues: Glutamate--tRNA ligase (493 aa).

The 'HIGH' region motif lies at 10–20 (PSPTGDPHVGT). 4 residues coordinate Zn(2+): C107, C109, C134, and H136. Residues 251-255 (KLSKR) carry the 'KMSKS' region motif. An ATP-binding site is contributed by K254.

It belongs to the class-I aminoacyl-tRNA synthetase family. Glutamate--tRNA ligase type 1 subfamily. In terms of assembly, monomer. The cofactor is Zn(2+).

The protein localises to the cytoplasm. It carries out the reaction tRNA(Glu) + L-glutamate + ATP = L-glutamyl-tRNA(Glu) + AMP + diphosphate. Its function is as follows. Catalyzes the attachment of glutamate to tRNA(Glu) in a two-step reaction: glutamate is first activated by ATP to form Glu-AMP and then transferred to the acceptor end of tRNA(Glu). This Stutzerimonas stutzeri (strain A1501) (Pseudomonas stutzeri) protein is Glutamate--tRNA ligase.